Reading from the N-terminus, the 130-residue chain is Small ribosomal subunit protein uS11 (130 aa).

Belongs to the universal ribosomal protein uS11 family. Part of the 30S ribosomal subunit. Interacts with proteins S7 and S18. Binds to IF-3.

Located on the platform of the 30S subunit, it bridges several disparate RNA helices of the 16S rRNA. Forms part of the Shine-Dalgarno cleft in the 70S ribosome. The sequence is that of Small ribosomal subunit protein uS11 from Thiobacillus denitrificans (strain ATCC 25259 / T1).